The chain runs to 611 residues: Glutamine--fructose-6-phosphate aminotransferase [isomerizing] (611 aa).

The Nucleophile; for GATase activity role is filled by cysteine 2. The region spanning 2–219 is the Glutamine amidotransferase type-2 domain; it reads CGIVGAIAER…EGDIAEIRRD (218 aa). SIS domains are found at residues 287-427 and 460-601; these read AAEL…VQKR and VSEL…VDQP. The active-site For Fru-6P isomerization activity is lysine 606.

As to quaternary structure, homodimer.

It localises to the cytoplasm. It carries out the reaction D-fructose 6-phosphate + L-glutamine = D-glucosamine 6-phosphate + L-glutamate. Catalyzes the first step in hexosamine metabolism, converting fructose-6P into glucosamine-6P using glutamine as a nitrogen source. This chain is Glutamine--fructose-6-phosphate aminotransferase [isomerizing], found in Pseudomonas aeruginosa (strain ATCC 15692 / DSM 22644 / CIP 104116 / JCM 14847 / LMG 12228 / 1C / PRS 101 / PAO1).